We begin with the raw amino-acid sequence, 598 residues long: MCGIIGYIGPRKASDVIVEGLKRLEYRGYDSAGIATCYEGKIFIKKGAGKIDELVKKLNFLELPGNIGIGHTRWATHGIPNDTNAHPHTDCTGKIVVVHNGIIENFQELKRELLKRGHVFRSDTDTEVIAHLIEENLRITGNFEDAFRMSLLRLRGSYALVVLFADDPERLYIARKDSPLIIGIGKGEMFMASDIPAFLAYTRRAVFLDDGEYGIVSKDWFTIKDIITGAVKTKEIHEIQWTLEMAEKGGYEHFMLKEIFEQPKAIKDAIYGNVKEAPKVAELLMKYDRIIITGMGTSYHAALVGKYLIQRFGKVPVIVEEASELRYEYEDILDNRSLLIAITQSGETADTVAAMKLAKSKGVEVVGIVNVVGSLATRIADETLYTHAGPEIGVAATKTYTTQLVVLTLLAKELGKLVGIDVSQIEGTIPRLPELVDSSLKINDKIREIAVKLNDKRDFFYIGRGINYPTALEGALKIKEIAYVHAEGLSAGELKHGPLALIEDGIPVVGIAPTGKTFEKMLSNIEEAKARGGFIISLGDDVRLHQVSDIFIRLPKVPEELAPITYIVPLQLLAYHLAVLKGHNPDRPRNLAKSVTVE.

Residue Cys-2 is the Nucleophile; for GATase activity of the active site. In terms of domain architecture, Glutamine amidotransferase type-2 spans 2 to 219 (CGIIGYIGPR…DGEYGIVSKD (218 aa)). SIS domains are found at residues 280–420 (VAEL…LVGI) and 449–588 (IAVK…PDRP). The For Fru-6P isomerization activity role is filled by Lys-593.

In terms of assembly, homodimer.

It localises to the cytoplasm. It catalyses the reaction D-fructose 6-phosphate + L-glutamine = D-glucosamine 6-phosphate + L-glutamate. Functionally, catalyzes the first step in hexosamine metabolism, converting fructose-6P into glucosamine-6P using glutamine as a nitrogen source. The polypeptide is Glutamine--fructose-6-phosphate aminotransferase [isomerizing] (Pyrococcus horikoshii (strain ATCC 700860 / DSM 12428 / JCM 9974 / NBRC 100139 / OT-3)).